Here is a 434-residue protein sequence, read N- to C-terminus: Beta-enolase (434 aa).

Alanine 2 carries the N-acetylalanine modification. Threonine 72 is modified (phosphothreonine). Residues serine 83 and serine 157 each carry the phosphoserine modification. Histidine 158 and glutamate 167 together coordinate substrate. Serine 176 carries the post-translational modification Phosphoserine. Phosphothreonine is present on threonine 205. Glutamate 210 (proton donor) is an active-site residue. Phosphothreonine is present on threonine 229. Tyrosine 236 carries the phosphotyrosine modification. Aspartate 245 is a binding site for Mg(2+). At serine 263 the chain carries Phosphoserine. Substrate-binding residues include glutamate 293 and aspartate 318. Residues glutamate 293 and aspartate 318 each contribute to the Mg(2+) site. Lysine 343 functions as the Proton acceptor in the catalytic mechanism. Substrate contacts are provided by residues 370–373 (SHRS) and lysine 394.

It belongs to the enolase family. In terms of assembly, mammalian enolase is composed of 3 isozyme subunits, alpha, beta and gamma, which can form homodimers or heterodimers which are cell-type and development-specific. Interacts with PNKD. It depends on Mg(2+) as a cofactor.

It is found in the cytoplasm. The catalysed reaction is (2R)-2-phosphoglycerate = phosphoenolpyruvate + H2O. It participates in carbohydrate degradation; glycolysis; pyruvate from D-glyceraldehyde 3-phosphate: step 4/5. Glycolytic enzyme that catalyzes the conversion of 2-phosphoglycerate to phosphoenolpyruvate. Appears to have a function in striated muscle development and regeneration. The chain is Beta-enolase (ENO3) from Bos taurus (Bovine).